The primary structure comprises 64 residues: MKLTCMLVVLLLVLPFGDLIANTGGLCGMPPGVCYPNGCACGQDTPCCHPSGCNRYNYCGPLLE.

The N-terminal stretch at 1–21 is a signal peptide; the sequence is MKLTCMLVVLLLVLPFGDLIA.

Belongs to the conotoxin O1 superfamily. In terms of processing, contains 4 disulfide bonds. As to expression, expressed by the venom duct.

Its subcellular location is the secreted. Probable neurotoxin. The protein is Conotoxin Cal12.4 of Californiconus californicus (California cone).